The chain runs to 282 residues: 4-diphosphocytidyl-2-C-methyl-D-erythritol kinase (282 aa).

Residue K12 is part of the active site. Residue 95-105 coordinates ATP; sequence PMGGGIGGGSS. D137 is a catalytic residue.

The protein belongs to the GHMP kinase family. IspE subfamily.

It carries out the reaction 4-CDP-2-C-methyl-D-erythritol + ATP = 4-CDP-2-C-methyl-D-erythritol 2-phosphate + ADP + H(+). Its pathway is isoprenoid biosynthesis; isopentenyl diphosphate biosynthesis via DXP pathway; isopentenyl diphosphate from 1-deoxy-D-xylulose 5-phosphate: step 3/6. In terms of biological role, catalyzes the phosphorylation of the position 2 hydroxy group of 4-diphosphocytidyl-2C-methyl-D-erythritol. The polypeptide is 4-diphosphocytidyl-2-C-methyl-D-erythritol kinase (Pseudomonas aeruginosa (strain ATCC 15692 / DSM 22644 / CIP 104116 / JCM 14847 / LMG 12228 / 1C / PRS 101 / PAO1)).